The sequence spans 97 residues: uncharacterized protein (97 aa).

Disordered stretches follow at residues M1–D20 and V52–A97.

This is an uncharacterized protein from Paracoccus pantotrophus (Thiosphaera pantotropha).